Consider the following 454-residue polypeptide: tRNA modification GTPase MnmE (454 aa).

(6S)-5-formyl-5,6,7,8-tetrahydrofolate is bound by residues Arg23, Glu80, and Lys120. Residues 216 to 377 enclose the TrmE-type G domain; it reads GMKVVIAGRP…LRNHLKQSMG (162 aa). Residue Asn226 participates in K(+) binding. GTP-binding positions include 226–231, 245–251, 270–273, 335–338, and 358–360; these read NAGKSS, TDIAGTT, DTAG, NKAD, and SAR. Ser230 is a binding site for Mg(2+). 3 residues coordinate K(+): Thr245, Ile247, and Thr250. Thr251 is a binding site for Mg(2+). Lys454 is a (6S)-5-formyl-5,6,7,8-tetrahydrofolate binding site.

It belongs to the TRAFAC class TrmE-Era-EngA-EngB-Septin-like GTPase superfamily. TrmE GTPase family. As to quaternary structure, homodimer. Heterotetramer of two MnmE and two MnmG subunits. The cofactor is K(+).

The protein localises to the cytoplasm. In terms of biological role, exhibits a very high intrinsic GTPase hydrolysis rate. Involved in the addition of a carboxymethylaminomethyl (cmnm) group at the wobble position (U34) of certain tRNAs, forming tRNA-cmnm(5)s(2)U34. The chain is tRNA modification GTPase MnmE from Salmonella arizonae (strain ATCC BAA-731 / CDC346-86 / RSK2980).